We begin with the raw amino-acid sequence, 156 residues long: Ribosomal RNA large subunit methyltransferase H (156 aa).

S-adenosyl-L-methionine contacts are provided by residues Leu-73, Gly-104, and 123 to 128 (LSSLTL).

It belongs to the RNA methyltransferase RlmH family. Homodimer.

Its subcellular location is the cytoplasm. It carries out the reaction pseudouridine(1915) in 23S rRNA + S-adenosyl-L-methionine = N(3)-methylpseudouridine(1915) in 23S rRNA + S-adenosyl-L-homocysteine + H(+). In terms of biological role, specifically methylates the pseudouridine at position 1915 (m3Psi1915) in 23S rRNA. The protein is Ribosomal RNA large subunit methyltransferase H of Neisseria meningitidis serogroup A / serotype 4A (strain DSM 15465 / Z2491).